Reading from the N-terminus, the 396-residue chain is Stearoyl-[acyl-carrier-protein] 9-desaturase, chloroplastic (396 aa).

The transit peptide at 1 to 32 (MALKLNPVTTFPSTRSLNNFSSRSPRTFLMAA) directs the protein to the chloroplast. The Fe cation site is built by glutamate 138, glutamate 176, histidine 179, glutamate 229, glutamate 262, and histidine 265.

It belongs to the fatty acid desaturase type 2 family. As to quaternary structure, homodimer. The cofactor is Fe(2+).

The protein resides in the plastid. It localises to the chloroplast. The catalysed reaction is octadecanoyl-[ACP] + 2 reduced [2Fe-2S]-[ferredoxin] + O2 + 2 H(+) = (9Z)-octadecenoyl-[ACP] + 2 oxidized [2Fe-2S]-[ferredoxin] + 2 H2O. It participates in lipid metabolism; fatty acid metabolism. Functionally, converts stearoyl-ACP to oleoyl-ACP by introduction of a cis double bond between carbons 9 and 10 of the acyl chain. The polypeptide is Stearoyl-[acyl-carrier-protein] 9-desaturase, chloroplastic (Linum usitatissimum (Flax)).